We begin with the raw amino-acid sequence, 103 residues long: Phosphoribosyl-ATP pyrophosphatase (103 aa).

The disordered stretch occupies residues 84–103 (LQSREGKLSKTSDRKEINDL).

The protein belongs to the PRA-PH family.

It is found in the cytoplasm. The enzyme catalyses 1-(5-phospho-beta-D-ribosyl)-ATP + H2O = 1-(5-phospho-beta-D-ribosyl)-5'-AMP + diphosphate + H(+). Its pathway is amino-acid biosynthesis; L-histidine biosynthesis; L-histidine from 5-phospho-alpha-D-ribose 1-diphosphate: step 2/9. In Listeria innocua serovar 6a (strain ATCC BAA-680 / CLIP 11262), this protein is Phosphoribosyl-ATP pyrophosphatase (hisE).